A 158-amino-acid chain; its full sequence is MARAKAEIQPVAENRKARHDYFVEETYEAGIVLVGSEVKSCRAGRVNLRDAYAQIKDGEIFLLNCHISPFEQANRFNHEPLRPRKLLMHKSEIHRLYGKVREKGFTLVPLRLYFNQKGKVKVELALAKGKRAYDKRDDIAAREAKREMARALRGRYDD.

The protein belongs to the SmpB family.

The protein resides in the cytoplasm. Required for rescue of stalled ribosomes mediated by trans-translation. Binds to transfer-messenger RNA (tmRNA), required for stable association of tmRNA with ribosomes. tmRNA and SmpB together mimic tRNA shape, replacing the anticodon stem-loop with SmpB. tmRNA is encoded by the ssrA gene; the 2 termini fold to resemble tRNA(Ala) and it encodes a 'tag peptide', a short internal open reading frame. During trans-translation Ala-aminoacylated tmRNA acts like a tRNA, entering the A-site of stalled ribosomes, displacing the stalled mRNA. The ribosome then switches to translate the ORF on the tmRNA; the nascent peptide is terminated with the 'tag peptide' encoded by the tmRNA and targeted for degradation. The ribosome is freed to recommence translation, which seems to be the essential function of trans-translation. The protein is SsrA-binding protein of Symbiobacterium thermophilum (strain DSM 24528 / JCM 14929 / IAM 14863 / T).